Consider the following 531-residue polypeptide: Endoglucanase 7 (531 aa).

Positions 1 to 27 (MRGRALVLVAALLLQLLLLAAAGGAGA) are cleaved as a signal peptide. The active-site Nucleophile is the Asp89. Catalysis depends on residues His430, Asp482, and Glu491.

It belongs to the glycosyl hydrolase 9 (cellulase E) family. As to expression, ubiquitous.

The protein resides in the secreted. The enzyme catalyses Endohydrolysis of (1-&gt;4)-beta-D-glucosidic linkages in cellulose, lichenin and cereal beta-D-glucans.. The chain is Endoglucanase 7 (GLU10) from Oryza sativa subsp. japonica (Rice).